The sequence spans 595 residues: Putative lipase atg15 (595 aa).

Residues 1-20 (MKGLRGHNKKSFWGNTRLSD) are Cytoplasmic-facing. A helical; Signal-anchor for type II membrane protein transmembrane segment spans residues 21-41 (LLWPVTLLPGLISAYQPVYLG). Residues 42 to 595 (SRQSSPFLPP…TTTGKHLGRF (554 aa)) are Lumenal-facing. N-linked (GlcNAc...) asparagine glycosylation is found at Asn-164, Asn-199, Asn-221, Asn-279, and Asn-303. The Charge relay system role is filled by Ser-319. Asn-465 carries an N-linked (GlcNAc...) asparagine glycan.

Belongs to the AB hydrolase superfamily. Lipase family. In terms of assembly, binds to both phosphatidylinositol (PI) and phosphatidylinositol 3,5-bisphosphate (PIP2).

It localises to the endosome. Its subcellular location is the multivesicular body membrane. The protein localises to the prevacuolar compartment membrane. It catalyses the reaction a triacylglycerol + H2O = a diacylglycerol + a fatty acid + H(+). Its function is as follows. Lipase which is essential for lysis of subvacuolar cytoplasm to vacuole targeted bodies and intravacuolar autophagic bodies. Involved in the lysis of intravacuolar multivesicular body (MVB) vesicles. The intravacuolar membrane disintegration by atg15 is critical to life span extension. The polypeptide is Putative lipase atg15 (atg15) (Aspergillus niger (strain ATCC MYA-4892 / CBS 513.88 / FGSC A1513)).